Consider the following 161-residue polypeptide: uncharacterized protein (161 aa).

Residues 1–10 show a composition bias toward polar residues; the sequence is MSKQQEQDTP. Disordered regions lie at residues 1-20, 55-84, and 118-161; these read MSKQ…QRLQ, KKTR…MSDE, and LLQQ…ANNS. A coiled-coil region spans residues 82 to 107; that stretch reads SDEEYARQLQEEMDRLDASIQMDKEA. The segment covering 144–161 has biased composition (low complexity); that stretch reads QQSSNTTTSSSCQSANNS.

This is an uncharacterized protein from Caenorhabditis elegans.